A 359-amino-acid polypeptide reads, in one-letter code: 3-dehydroquinate synthase (359 aa).

NAD(+) contacts are provided by residues 70–75, 105–109, 129–130, Lys142, Lys151, and 169–172; these read DGEQYK, GVIGD, TT, and FYKT. Residues Glu184, His247, and His264 each contribute to the Zn(2+) site.

This sequence belongs to the sugar phosphate cyclases superfamily. Dehydroquinate synthase family. Co(2+) serves as cofactor. The cofactor is Zn(2+). NAD(+) is required as a cofactor.

It localises to the cytoplasm. The catalysed reaction is 7-phospho-2-dehydro-3-deoxy-D-arabino-heptonate = 3-dehydroquinate + phosphate. Its pathway is metabolic intermediate biosynthesis; chorismate biosynthesis; chorismate from D-erythrose 4-phosphate and phosphoenolpyruvate: step 2/7. Catalyzes the conversion of 3-deoxy-D-arabino-heptulosonate 7-phosphate (DAHP) to dehydroquinate (DHQ). The chain is 3-dehydroquinate synthase from Francisella tularensis subsp. tularensis (strain WY96-3418).